Consider the following 445-residue polypeptide: Probable multidrug resistance protein YpnP (445 aa).

Transmembrane regions (helical) follow at residues 15–35 (LVLF…FQFI), 49–69 (LGAA…ILGL), 95–115 (AFVV…FFLS), 136–156 (LQIQ…STVL), 168–188 (FIAF…SVFR), 194–214 (AAYS…FYVI), 240–260 (IPAG…MSVV), 277–297 (LDSI…SMAG), 314–334 (LGVI…WVFG), 355–375 (LKWI…NGIV), 384–404 (VLVL…ALFS), and 411–431 (GIGL…FLYY).

The protein belongs to the multi antimicrobial extrusion (MATE) (TC 2.A.66.1) family.

Its subcellular location is the cell membrane. The chain is Probable multidrug resistance protein YpnP (ypnP) from Bacillus subtilis (strain 168).